Reading from the N-terminus, the 209-residue chain is Mitochondrial import inner membrane translocase subunit Tim23 (209 aa).

3 consecutive transmembrane segments (helical) span residues 73 to 93 (FELAFFTIGGCCISGAAFGAL), 125 to 145 (ALWANTLGSLALLYSAFGVIV), and 180 to 200 (GGLAGLALASTFALYNNWEHI).

This sequence belongs to the Tim17/Tim22/Tim23 family. In terms of assembly, component of the TIM23 complex at least composed of timm23, timm17 and timm50. The complex interacts with the timm44 component of the PAM complex.

It is found in the mitochondrion inner membrane. Its function is as follows. Essential component of the TIM23 complex, a complex that mediates the translocation of transit peptide-containing proteins across the mitochondrial inner membrane. In Xenopus laevis (African clawed frog), this protein is Mitochondrial import inner membrane translocase subunit Tim23 (timm23).